The sequence spans 215 residues: Protein-L-isoaspartate O-methyltransferase (215 aa).

S62 is an active-site residue.

It belongs to the methyltransferase superfamily. L-isoaspartyl/D-aspartyl protein methyltransferase family.

The protein resides in the cytoplasm. It catalyses the reaction [protein]-L-isoaspartate + S-adenosyl-L-methionine = [protein]-L-isoaspartate alpha-methyl ester + S-adenosyl-L-homocysteine. In terms of biological role, catalyzes the methyl esterification of L-isoaspartyl residues in peptides and proteins that result from spontaneous decomposition of normal L-aspartyl and L-asparaginyl residues. It plays a role in the repair and/or degradation of damaged proteins. This is Protein-L-isoaspartate O-methyltransferase from Ruegeria sp. (strain TM1040) (Silicibacter sp.).